Consider the following 512-residue polypeptide: Sucrose transport protein SUC5 (512 aa).

The disordered stretch occupies residues 1-27 (MGALEAERAANNATALETQSSPEDLGQ). At 1–33 (MGALEAERAANNATALETQSSPEDLGQPSPLRK) the chain is on the cytoplasmic side. Residues 11-22 (NNATALETQSSP) are compositionally biased toward polar residues. Ser-20 carries the phosphoserine modification. The helical transmembrane segment at 34 to 54 (IISVASIAAGVQFGWALQLSL) threads the bilayer. At 55–67 (LTPYIQLLGIPHK) the chain is on the extracellular side. A helical membrane pass occupies residues 68 to 88 (WSSYMWLCGPISGMIVQPIVG). Residues 89 to 102 (YHSDRCESRFGRRR) are Cytoplasmic-facing. The chain crosses the membrane as a helical span at residues 103–123 (PFIAAGVALVAVSVFLIGFAA). At 124–140 (DMGHSFGDKLENKVRTR) the chain is on the extracellular side. Residues 141–161 (AIIIFLTGFWFLDVANNTLQG) form a helical membrane-spanning segment. Residues 162–179 (PCRAFLADLAAGDAKKTR) are Cytoplasmic-facing. A helical membrane pass occupies residues 180 to 200 (VANACFSFFMAVGNVLGYAAG). The Extracellular segment spans residues 201-225 (SYTNLHKMFPFTMTKACDIYCANLK). The chain crosses the membrane as a helical span at residues 226–246 (TCFFLSITLLLIVTFSSLWYV). The Cytoplasmic segment spans residues 247 to 281 (KDKQWSPPQGDKEEKTSSLFFFGEIFGAVRHMKRP). A helical transmembrane segment spans residues 282–302 (MVMLLIVTVINWIAWFPFILY). At 303 to 333 (DTDWMGREVYGGNSDGDERSKKLYDQGVQAG) the chain is on the extracellular side. Residues 334–354 (ALGLMFNSILLGFVSLGVESI) form a helical membrane-spanning segment. At 355–363 (GRKMGGAKR) the chain is on the cytoplasmic side. The helical transmembrane segment at 364 to 384 (LWGCVNFILAIGLAMTVLVTK) threads the bilayer. Residues 385–406 (SAEHHREIAGPLAGPSSGIKAG) are Extracellular-facing. The helical transmembrane segment at 407-427 (VFSLFTVLGIPLAITYSIPFA) threads the bilayer. The Cytoplasmic segment spans residues 428–440 (LASIFSTNSGAGQ). A helical transmembrane segment spans residues 441–461 (GLSLGVLNIAICIPQMIVSFS). Residues 462–473 (SGPLDAQFGGGN) are Extracellular-facing. Residues 474–494 (LPSFVVGAIAAAVSGVLALTV) traverse the membrane as a helical segment. Residues 495-512 (LPSPPPDAPAMSGAMGFH) lie on the Cytoplasmic side of the membrane.

This sequence belongs to the glycoside-pentoside-hexuronide (GPH) cation symporter transporter (TC 2.A.2.4) family. As to expression, widely expressed. Expressed in the endosperm and on the epidermis of the outer surface of the cotyledons of torpedo-stage or older embryos.

The protein localises to the cell membrane. The enzyme catalyses sucrose(out) + H(+)(out) = sucrose(in) + H(+)(in). It participates in glycan biosynthesis; sucrose metabolism. With respect to regulation, inhibited by protonophores (e.g. carbonyl cyanide m-chlorophenyl-hydrazone (CCCP)) and SH group inhibitors (e.g. p-chloromercuribenzene sulphonic acid (PCMBS)). Functionally, responsible in a heterologous system for the transport of sucrose into the cell, with the concomitant uptake of protons (symport system). Can also transport biotin, and probably maltose at a lesser rate. In planta, the role of SUC5 for the transport of sucrose seems to be negligible. Plays a role in the nutrition of the filial tissues during early seed development and is probably involved in the import of biotin into the endosperm and the embryo epidermis. The polypeptide is Sucrose transport protein SUC5 (Arabidopsis thaliana (Mouse-ear cress)).